Consider the following 338-residue polypeptide: Probable tRNA pseudouridine synthase B (338 aa).

D78 functions as the Nucleophile in the catalytic mechanism. One can recognise a PUA domain in the interval 245 to 320 (LPKIILRDSA…LAATSVRIMM (76 aa)).

It belongs to the pseudouridine synthase TruB family. Type 2 subfamily.

The catalysed reaction is uridine(55) in tRNA = pseudouridine(55) in tRNA. Could be responsible for synthesis of pseudouridine from uracil-55 in the psi GC loop of transfer RNAs. This chain is Probable tRNA pseudouridine synthase B, found in Methanosarcina barkeri (strain Fusaro / DSM 804).